The primary structure comprises 688 residues: Translation initiation factor IF-2 (688 aa).

Composition is skewed to basic and acidic residues over residues 53-62 (GKEKSEKTKE) and 86-95 (KRDDKNEKVN). The tract at residues 53–100 (GKEKSEKTKEEDDEIETTAKNPIKESMNNKKSNKRDDKNEKVNTENAE) is disordered. The region spanning 187 to 354 (KRSPIITVMG…MILLSSEILE (168 aa)) is the tr-type G domain. The interval 196-203 (GHVDHGKT) is G1. 196–203 (GHVDHGKT) serves as a coordination point for GTP. The tract at residues 221-225 (GITQH) is G2. Residues 242-245 (DTPG) form a G3 region. Residues 242 to 246 (DTPGH) and 296 to 299 (NKID) contribute to the GTP site. The tract at residues 296 to 299 (NKID) is G4. A G5 region spans residues 332-334 (SAH).

The protein belongs to the TRAFAC class translation factor GTPase superfamily. Classic translation factor GTPase family. IF-2 subfamily.

It localises to the cytoplasm. One of the essential components for the initiation of protein synthesis. Protects formylmethionyl-tRNA from spontaneous hydrolysis and promotes its binding to the 30S ribosomal subunits. Also involved in the hydrolysis of GTP during the formation of the 70S ribosomal complex. This Clostridium botulinum (strain Kyoto / Type A2) protein is Translation initiation factor IF-2.